The following is a 383-amino-acid chain: Deoxyhypusine synthase-like protein (383 aa).

It belongs to the deoxyhypusine synthase family.

This chain is Deoxyhypusine synthase-like protein, found in Nostoc sp. (strain PCC 7120 / SAG 25.82 / UTEX 2576).